A 272-amino-acid chain; its full sequence is Bis(5'-nucleosyl)-tetraphosphatase, symmetrical (272 aa).

The protein belongs to the Ap4A hydrolase family.

It catalyses the reaction P(1),P(4)-bis(5'-adenosyl) tetraphosphate + H2O = 2 ADP + 2 H(+). In terms of biological role, hydrolyzes diadenosine 5',5'''-P1,P4-tetraphosphate to yield ADP. The chain is Bis(5'-nucleosyl)-tetraphosphatase, symmetrical from Chromohalobacter salexigens (strain ATCC BAA-138 / DSM 3043 / CIP 106854 / NCIMB 13768 / 1H11).